The sequence spans 259 residues: MNIVVCLKQVPDTAEVRIDPVKGTLIREGVPSIINPDDKNALEEALVLKDNYGAHVTVISMGPPQAKNALVEALAMGADEAVLLTDRAFGGADTLATSHTIAAGIKKLKYDIVFAGRQAIDGDTAQVGPEIAEHLGIPQVTYVEKVEVDGDTLKIRKAWEDGYEVVEVKTPVLLTAIKELNVPRYMSVEKIFGAFDKEVKMWTADDIDVDKANLGLKGSPTKVKKSSTKEVKGQGEVIDKPVKEAAAYVVSKLKEEHYI.

Belongs to the ETF beta-subunit/FixA family. Heterodimer of an alpha and a beta subunit. FAD is required as a cofactor. AMP serves as cofactor.

The electron transfer flavoprotein serves as a specific electron acceptor for other dehydrogenases. It transfers the electrons to the main respiratory chain via ETF-ubiquinone oxidoreductase (ETF dehydrogenase). This Clostridium acetobutylicum (strain ATCC 824 / DSM 792 / JCM 1419 / IAM 19013 / LMG 5710 / NBRC 13948 / NRRL B-527 / VKM B-1787 / 2291 / W) protein is Electron transfer flavoprotein subunit beta (etfB).